The following is a 322-amino-acid chain: Heat-inducible transcription repressor HrcA (322 aa).

This sequence belongs to the HrcA family.

Functionally, negative regulator of class I heat shock genes (grpE-dnaK-dnaJ and groELS operons). Prevents heat-shock induction of these operons. This chain is Heat-inducible transcription repressor HrcA, found in Staphylococcus carnosus (strain TM300).